A 506-amino-acid polypeptide reads, in one-letter code: Maturase K (506 aa).

It belongs to the intron maturase 2 family. MatK subfamily.

It localises to the plastid. Its subcellular location is the chloroplast. Usually encoded in the trnK tRNA gene intron. Probably assists in splicing its own and other chloroplast group II introns. This is Maturase K from Rhododendron tomentosum (Marsh Labrador tea).